The sequence spans 134 residues: Lymphocyte antigen 6S (134 aa).

Positions 1–26 (MSSLQAMKTLSLVLLVALLSMERAQG) are cleaved as a signal peptide. The region spanning 28-76 (RCYRCLAVLEGASCSVVSCPFLDGVCVSQKVSVFGSKVRGENKLSLLSC) is the UPAR/Ly6 domain. 4 disulfide bridges follow: C29–C53, C32–C41, C76–C98, and C99–C104. N105 carries GPI-anchor amidated asparagine lipidation. A propeptide spans 106–134 (AVVLAASSPWALCVQLLLSLGSVFLWALL) (removed in mature form).

It localises to the cell membrane. In Homo sapiens (Human), this protein is Lymphocyte antigen 6S.